The primary structure comprises 207 residues: Elongation factor 1-beta (207 aa).

N-acetylalanine is present on Ala2. The segment at 70 to 96 is disordered; sequence FPGIPTSASKEEDDDVDLFGSDEEDEE. The segment covering 80 to 96 has biased composition (acidic residues); it reads EEDDDVDLFGSDEEDEE. A Phosphoserine; by CK2 modification is found at Ser90.

Belongs to the EF-1-beta/EF-1-delta family. In terms of assembly, EF-1 is composed of 4 subunits: alpha, beta, delta, and gamma. Post-translationally, phosphorylation affects the GDP/GTP exchange rate.

In terms of biological role, EF-1-beta and EF-1-delta stimulate the exchange of GDP bound to EF-1-alpha to GTP. This is Elongation factor 1-beta from Artemia salina (Brine shrimp).